The chain runs to 540 residues: H(+)/hexose cotransporter 2 (540 aa).

The Cytoplasmic portion of the chain corresponds to 1 to 29; sequence MAGGGPVASTTTNRASQYGYARGGLNWYI. A helical membrane pass occupies residues 30-50; that stretch reads FIVALTAGSGGLLFGYDIGVT. Topologically, residues 51–90 are extracellular; it reads GGVTSMPEFLQKFFPSIYDRTQQPSDSKDPYCTYDDQKLQ. A helical transmembrane segment spans residues 91–111; sequence LFTSSFFLAGMFVSFFAGSVV. Over 112-124 the chain is Cytoplasmic; the sequence is RRWGRKPTMLIAS. Residues 125–135 form a helical membrane-spanning segment; that stretch reads VLFLAGAGLNA. Topologically, residues 136–147 are extracellular; it reads GAQDLAMLVIGR. The chain crosses the membrane as a helical span at residues 148–168; the sequence is VLLGFGVGGGNNAVPLYLSEC. Topologically, residues 169–176 are cytoplasmic; the sequence is APPKYRGG. A helical transmembrane segment spans residues 177-197; that stretch reads LNMMFQLAVTIGIIVAQLVNY. Residues 198-207 are Extracellular-facing; that stretch reads GTQTMNNGWR. Residues 208-228 traverse the membrane as a helical segment; it reads LSLGLAGVPAIILLIGSLLLP. Topologically, residues 229–296 are cytoplasmic; that stretch reads ETPNSLIERG…YSPMLIVTSL (68 aa). Residues 297 to 317 traverse the membrane as a helical segment; that stretch reads IAMLQQLTGINAIMFYVPVLF. Topologically, residues 318–326 are extracellular; the sequence is SSFGTARHA. The helical transmembrane segment at 327 to 337 threads the bilayer; that stretch reads ALLNTVIIGAV. At 338-355 the chain is on the cytoplasmic side; sequence NVAATFVSIFSVDKFGRR. A helical membrane pass occupies residues 356-376; that stretch reads GLFLEGGIQMFIGQVVTAAVL. Over 377–396 the chain is Extracellular; it reads GVELNKYGTNLPSSTAAGVL. A helical transmembrane segment spans residues 397-417; it reads VVICVYVAAFAWSWGPLGWLV. The Cytoplasmic portion of the chain corresponds to 418–435; that stretch reads PSEIQTLETRGAGMSMAV. A helical transmembrane segment spans residues 436 to 456; it reads IVNFLFSFVIGQAFLSMMCAM. Residues 457–458 are Extracellular-facing; the sequence is RW. A helical transmembrane segment spans residues 459–479; sequence GVFLFFAGWVVIMTFFVYFCL. Topologically, residues 480 to 540 are cytoplasmic; it reads PETKGVPVET…SEDGKPASDQ (61 aa).

This sequence belongs to the major facilitator superfamily. Sugar transporter (TC 2.A.1.1) family.

It is found in the membrane. Functionally, active uptake of galactose. The protein is H(+)/hexose cotransporter 2 (HUP2) of Parachlorella kessleri (Green alga).